A 173-amino-acid polypeptide reads, in one-letter code: ADP-ribosylation factor-like protein 11 (173 aa).

A lipid anchor (N-myristoyl glycine) is attached at Gly2. Residues 17 to 24 (GLDCAGKT), 61 to 65 (DIGGQ), and 120 to 123 (NKQE) each bind GTP.

This sequence belongs to the small GTPase superfamily. Arf family.

In terms of biological role, may play a role in apoptosis. May act as a tumor suppressor. This is ADP-ribosylation factor-like protein 11 (Arl11) from Rattus norvegicus (Rat).